The chain runs to 261 residues: Enolase-phosphatase E1 (261 aa).

Positions 16 and 18 each coordinate Mg(2+). Substrate is bound by residues 150 to 151 and Lys184; that span reads SS. Asp209 provides a ligand contact to Mg(2+).

This sequence belongs to the HAD-like hydrolase superfamily. MasA/MtnC family. Monomer. The cofactor is Mg(2+).

The protein resides in the cytoplasm. It is found in the nucleus. It catalyses the reaction 5-methylsulfanyl-2,3-dioxopentyl phosphate + H2O = 1,2-dihydroxy-5-(methylsulfanyl)pent-1-en-3-one + phosphate. The protein operates within amino-acid biosynthesis; L-methionine biosynthesis via salvage pathway; L-methionine from S-methyl-5-thio-alpha-D-ribose 1-phosphate: step 3/6. Its pathway is amino-acid biosynthesis; L-methionine biosynthesis via salvage pathway; L-methionine from S-methyl-5-thio-alpha-D-ribose 1-phosphate: step 4/6. Its function is as follows. Bifunctional enzyme that catalyzes the enolization of 2,3-diketo-5-methylthiopentyl-1-phosphate (DK-MTP-1-P) into the intermediate 2-hydroxy-3-keto-5-methylthiopentenyl-1-phosphate (HK-MTPenyl-1-P), which is then dephosphorylated to form the acireductone 1,2-dihydroxy-3-keto-5-methylthiopentene (DHK-MTPene). This is Enolase-phosphatase E1 (Enoph1) from Rattus norvegicus (Rat).